A 176-amino-acid chain; its full sequence is Urease accessory protein UreE (176 aa).

Residues 134-176 form a disordered region; that stretch reads EAGAYGSGGHHHHGESSQGHAHGPLAPIPVHQKIHRPSDIPSR.

The protein belongs to the UreE family.

The protein localises to the cytoplasm. In terms of biological role, involved in urease metallocenter assembly. Binds nickel. Probably functions as a nickel donor during metallocenter assembly. The sequence is that of Urease accessory protein UreE from Nitrosospira multiformis (strain ATCC 25196 / NCIMB 11849 / C 71).